A 430-amino-acid polypeptide reads, in one-letter code: Inactive metallocarboxypeptidase ECM14 (430 aa).

A signal peptide spans 1-24; the sequence is MLHMNSLWGCFLFVLLAVTGAVQG. A propeptide spanning residues 25–105 is cleaved from the precursor; the sequence is LQEDYSEYAV…TLPTSQMMAR (81 aa). N-linked (GlcNAc...) asparagine glycosylation occurs at Asn-41. The region spanning 120–425 is the Peptidase M14 domain; sequence EYRDLDTIYM…AALKYFCDFL (306 aa). Zn(2+) contacts are provided by His-182 and Glu-185. Substrate is bound by residues 182-185, Arg-240, and 257-258; these read HARE and DH. A disulfide bridge connects residues Cys-251 and Cys-272. A glycan (N-linked (GlcNAc...) asparagine) is linked at Asn-295. His-310 contributes to the Zn(2+) binding site. Residue 311–312 coordinates substrate; that stretch reads SY.

It belongs to the peptidase M14 family. Zn(2+) is required as a cofactor. Post-translationally, N-glycosylated.

It localises to the vacuole. The protein resides in the secreted. In terms of biological role, inactive carboxypeptidase that may play a role in cell wall organization and biogenesis. This chain is Inactive metallocarboxypeptidase ECM14, found in Saccharomyces cerevisiae (strain ATCC 204508 / S288c) (Baker's yeast).